Consider the following 939-residue polypeptide: Probable importin ECU10_0620 (939 aa).

The 68-residue stretch at 23-90 (AEAMLMDLEK…VENILDLFLY (68 aa)) folds into the Importin N-terminal domain.

The protein belongs to the importin beta family.

It localises to the nucleus. The protein localises to the cytoplasm. In terms of biological role, active in protein import into the nucleus. The polypeptide is Probable importin ECU10_0620 (Encephalitozoon cuniculi (strain GB-M1) (Microsporidian parasite)).